A 97-amino-acid chain; its full sequence is Protein E7 (97 aa).

Positions 1 to 41 (MHGNYPTLKEIVLELDPPDPVGLHCNEQLDSSEDEVDELAT) are E7 terminal domain. Positions 23-27 (LHCNE) match the LXCXE motif; interaction with host RB1 and TMEM173/STING motif. Residues 57-93 (CGTCNRNVRLVVQCTGTDICQLHTLLLGSLEILCPVC) fold into a zinc finger. The Nuclear export signal motif lies at 75–83 (ICQLHTLLL).

Belongs to the papillomaviridae E7 protein family. Homodimer. Homooligomer. Interacts with host RB1; this interaction induces dissociation of RB1-E2F1 complex thereby disrupting RB1 activity. Interacts with host EP300; this interaction represses EP300 transcriptional activity. Interacts with protein E2; this interaction inhibits E7 oncogenic activity. Interacts with host TMEM173/STING; this interaction impairs the ability of TMEM173/STING to sense cytosolic DNA and promote the production of type I interferon (IFN-alpha and IFN-beta). In terms of processing, highly phosphorylated.

It is found in the host cytoplasm. The protein localises to the host nucleus. In terms of biological role, plays a role in viral genome replication by driving entry of quiescent cells into the cell cycle. Stimulation of progression from G1 to S phase allows the virus to efficiently use the cellular DNA replicating machinery to achieve viral genome replication. E7 protein has both transforming and trans-activating activities. Induces the disassembly of the E2F1 transcription factor from RB1, with subsequent transcriptional activation of E2F1-regulated S-phase genes. Interferes with host histone deacetylation mediated by HDAC1 and HDAC2, leading to transcription activation. Also plays a role in the inhibition of both antiviral and antiproliferative functions of host interferon alpha. Interaction with host TMEM173/STING impairs the ability of TMEM173/STING to sense cytosolic DNA and promote the production of type I interferon (IFN-alpha and IFN-beta). This Homo sapiens (Human) protein is Protein E7.